Consider the following 1857-residue polypeptide: Fer-1-like protein 6 (1857 aa).

Residues 1–1824 (MFGLKVKKKR…YLIWKNYKKY (1824 aa)) lie on the Cytoplasmic side of the membrane. A disordered region spans residues 15–63 (KGLILANKAAKDSQGDTEALQEEPSHQEGPRGDLVHDDASIFPVPSASP). Residues 37 to 53 (EPSHQEGPRGDLVHDDA) show a composition bias toward basic and acidic residues. 2 consecutive C2 domains span residues 65-181 (RRSK…QFCN) and 225-356 (PIEK…DKGF). Residues 426–447 (SKDKDSKSSKGKDKADKTEDGK) are compositionally biased toward basic and acidic residues. Residues 426–469 (SKDKDSKSSKGKDKADKTEDGKSQQASNKTNSTEVEVESFDVPP) form a disordered region. A compositionally biased stretch (polar residues) spans 448-459 (SQQASNKTNSTE). C2 domains follow at residues 810–937 (GTNH…RLCY) and 969–1099 (PVEP…LAPI). Ca(2+) contacts are provided by aspartate 842, aspartate 848, aspartate 904, and aspartate 906. Disordered stretches follow at residues 1101–1148 (QVDG…VVPD), 1161–1203 (PDSS…RTIA), and 1224–1246 (AQKAKERNPKGKKGNTEAKPDEV). Over residues 1113–1129 (DSLTATESSGAHSSSQD) the composition is skewed to polar residues. Residues 1178–1189 (PPKDGKPKDPRK) show a composition bias toward basic and acidic residues. Basic residues predominate over residues 1190-1200 (PSRRSTKRRKR). Positions 1226–1245 (KAKERNPKGKKGNTEAKPDE) are enriched in basic and acidic residues. C2 domains are found at residues 1338-1457 (DSGQ…AICG) and 1578-1729 (DMPQ…KACD). Ca(2+)-binding residues include aspartate 1372, aspartate 1378, aspartate 1427, aspartate 1429, and aspartate 1435. Residues 1825 to 1845 (IIIAFILIILIIFLVLFIYTL) traverse the membrane as a helical segment. The Extracellular portion of the chain corresponds to 1846–1857 (PGAISRRIVVGS).

This sequence belongs to the ferlin family. Requires Ca(2+) as cofactor.

It localises to the membrane. This is Fer-1-like protein 6 (FER1L6) from Homo sapiens (Human).